Here is a 307-residue protein sequence, read N- to C-terminus: Aspartate carbamoyltransferase catalytic subunit (307 aa).

Carbamoyl phosphate-binding residues include R59 and T60. Residue K87 coordinates L-aspartate. Carbamoyl phosphate is bound by residues R109, H137, and Q140. Residues R170 and R224 each contribute to the L-aspartate site. Carbamoyl phosphate is bound by residues G265 and P266.

It belongs to the aspartate/ornithine carbamoyltransferase superfamily. ATCase family. In terms of assembly, heterododecamer (2C3:3R2) of six catalytic PyrB chains organized as two trimers (C3), and six regulatory PyrI chains organized as three dimers (R2).

The catalysed reaction is carbamoyl phosphate + L-aspartate = N-carbamoyl-L-aspartate + phosphate + H(+). The protein operates within pyrimidine metabolism; UMP biosynthesis via de novo pathway; (S)-dihydroorotate from bicarbonate: step 2/3. Catalyzes the condensation of carbamoyl phosphate and aspartate to form carbamoyl aspartate and inorganic phosphate, the committed step in the de novo pyrimidine nucleotide biosynthesis pathway. This Cytophaga hutchinsonii (strain ATCC 33406 / DSM 1761 / CIP 103989 / NBRC 15051 / NCIMB 9469 / D465) protein is Aspartate carbamoyltransferase catalytic subunit.